A 284-amino-acid chain; its full sequence is L-ribulose-5-phosphate 3-epimerase UlaE (284 aa).

This sequence belongs to the L-ribulose-5-phosphate 3-epimerase family.

The enzyme catalyses L-ribulose 5-phosphate = L-xylulose 5-phosphate. Its pathway is cofactor degradation; L-ascorbate degradation; D-xylulose 5-phosphate from L-ascorbate: step 3/4. Catalyzes the isomerization of L-xylulose-5-phosphate to L-ribulose-5-phosphate. Is involved in the anaerobic L-ascorbate utilization. The polypeptide is L-ribulose-5-phosphate 3-epimerase UlaE (Salmonella typhi).